The following is a 280-amino-acid chain: Chlorophyll a-b binding protein CP26, chloroplastic (280 aa).

Residues 1–48 (MASLGVSEMLGTPLNFRAVSRSSAPLASSPSTFKTVALFSKKKPAPAK) constitute a chloroplast transit peptide. Phe-70 is a chlorophyll b binding site. Residues Tyr-95, Glu-114, and His-117 each contribute to the chlorophyll a site. The next 2 membrane-spanning stretches (helical) occupy residues 110-130 (YQAF…GFII) and 167-187 (IPIN…GAEY). Residues Arg-119, Ile-167, Glu-186, and Arg-189 each contribute to the chlorophyll b site. Chlorophyll a is bound by residues Lys-224, Glu-225, Asn-228, Arg-230, Gln-242, and His-257. A helical membrane pass occupies residues 231-251 (LAMFAMLGFFIQAYVTGEGPV).

The protein belongs to the light-harvesting chlorophyll a/b-binding (LHC) protein family. Forms heterotrimers with LHCB3. The LHC complex consists of chlorophyll a-b binding proteins. The cofactor is Binds at least 14 chlorophylls (8 Chl-a and 6 Chl-b) and carotenoids such as lutein and neoxanthin.. In terms of processing, photoregulated by reversible phosphorylation of its threonine residues.

The protein resides in the plastid. It is found in the chloroplast thylakoid membrane. Its function is as follows. The light-harvesting complex (LHC) functions as a light receptor, it captures and delivers excitation energy to photosystems with which it is closely associated. This Arabidopsis thaliana (Mouse-ear cress) protein is Chlorophyll a-b binding protein CP26, chloroplastic (LHCB5).